The sequence spans 282 residues: Bis(5'-nucleosyl)-tetraphosphatase, symmetrical (282 aa).

This sequence belongs to the Ap4A hydrolase family.

The enzyme catalyses P(1),P(4)-bis(5'-adenosyl) tetraphosphate + H2O = 2 ADP + 2 H(+). In terms of biological role, hydrolyzes diadenosine 5',5'''-P1,P4-tetraphosphate to yield ADP. In Paraburkholderia phymatum (strain DSM 17167 / CIP 108236 / LMG 21445 / STM815) (Burkholderia phymatum), this protein is Bis(5'-nucleosyl)-tetraphosphatase, symmetrical.